The primary structure comprises 381 residues: Glycerophosphocholine acyltransferase 1 (381 aa).

Topologically, residues 1 to 63 are cytoplasmic; it reads MANNEDSNSN…IAKQAEEHER (63 aa). A helical transmembrane segment spans residues 64–84; it reads FINKVTHLVGVLGFGGFCFLL. Topologically, residues 85-89 are lumenal; it reads GARPQ. A helical transmembrane segment spans residues 90-110; that stretch reads DIPLVYCFFYVIFVPLRWIYY. Topologically, residues 111–116 are cytoplasmic; it reads RFKKWH. A helical membrane pass occupies residues 117–137; it reads YYLLDFCYYANTIFLVDLLLY. Residues 138 to 141 lie on the Lumenal side of the membrane; it reads PKNE. The helical transmembrane segment at 142 to 162 threads the bilayer; that stretch reads KLFMVCFSFAEGPLAWAIIVW. Topologically, residues 163 to 173 are cytoplasmic; the sequence is RCSLVFSSPDK. The chain crosses the membrane as a helical span at residues 174 to 194; the sequence is IVSVLIHLLPGLVFFTIRWWN. Residues 195–223 are Lumenal-facing; the sequence is PATFAAMHPVGTDRRVSWPYVEDKAYLFT. The helical transmembrane segment at 224-244 threads the bilayer; it reads WLFLVPLVVYTLWQVLYFLIV. Residues 245 to 291 lie on the Cytoplasmic side of the membrane; that stretch reads NVLRRQRLLRDPEVMTSYRELSKKAEKANNKLWQLSGLLGDQNRIWM. The chain crosses the membrane as a helical span at residues 292–312; sequence YILFQAIFTVATMALTVPIFL. The Lumenal portion of the chain corresponds to 313-315; that stretch reads SYR. The chain crosses the membrane as a helical span at residues 316–336; it reads LHVIFQILKISAAVWNGGSFL. Topologically, residues 337–381 are cytoplasmic; that stretch reads LEVMPRQVIQKEKKKKAEMQPIEEQILHHEAVSHPTENEPKSTET.

Belongs to the GPC1 family.

The protein localises to the membrane. It catalyses the reaction sn-glycerol 3-phosphocholine + an acyl-CoA = a 1-acyl-sn-glycero-3-phosphocholine + CoA. The catalysed reaction is sn-glycero-3-phosphoethanolamine + an acyl-CoA = a monoacyl-sn-glycero-3-phosphoethanolamine + CoA. The enzyme catalyses sn-glycerol 3-phosphocholine + (9Z)-octadecenoyl-CoA = (9Z-octadecenoyl)-sn-glycero-3-phosphocholine + CoA. Glycerophosphocholine acyltransferase (GPCAT) that utilizes acyl-CoA to acylate glycero-3-phosphocholine (GPC), forming lysophosphatidylcholine (LPC). Shows broad acyl specificities with a preference for 16:0-CoA, polyunsaturated acyl-CoA, and the hydroxylated ricinoleoyl-CoA. Also catalyzes the acylation of glycero-3-phosphoethanolamine (GPE) with acyl-CoA. In addition to acyl-CoA, GPCAT efficiently utilizes LPC and lysophosphatidylethanolamine (LPE) as acyl donors in the acylation of GPC. Contributes to the maintenance of phosphatidylcholine (PC) homeostasis and might also have specific functions in acyl editing of PC, such as transferring acyl groups modified at the sn-2 position of PC to the sn-1. In Arabidopsis thaliana (Mouse-ear cress), this protein is Glycerophosphocholine acyltransferase 1.